The following is a 310-amino-acid chain: Malate dehydrogenase (310 aa).

NAD(+) contacts are provided by residues 7 to 12 (GAGNVG) and Asp-32. Residues Arg-81 and Arg-87 each contribute to the substrate site. NAD(+) contacts are provided by residues Asn-94 and 117 to 119 (VSN). Residues Asn-119 and Arg-150 each contribute to the substrate site. His-174 functions as the Proton acceptor in the catalytic mechanism.

This sequence belongs to the LDH/MDH superfamily. MDH type 3 family.

The catalysed reaction is (S)-malate + NAD(+) = oxaloacetate + NADH + H(+). Catalyzes the reversible oxidation of malate to oxaloacetate. The sequence is that of Malate dehydrogenase from Chlorobium luteolum (strain DSM 273 / BCRC 81028 / 2530) (Pelodictyon luteolum).